The chain runs to 491 residues: uncharacterized protein (491 aa).

12 helical membrane-spanning segments follow: residues 48 to 68 (LILV…VAPC), 85 to 105 (ALIL…SAPL), 112 to 132 (RMLL…CGLA), 140 to 160 (IFRF…SGTI), 174 to 194 (AVMS…SGFI), 202 to 222 (WIFW…LPLL), 277 to 297 (PIVI…YLVL), 317 to 337 (LNYI…GIFI), 358 to 378 (VPVI…YGWT), 383 to 403 (THWI…MLGW), 408 to 428 (TYLI…ACCV), and 455 to 475 (LLAF…WFGG).

This sequence belongs to the major facilitator superfamily.

Its subcellular location is the membrane. This is an uncharacterized protein from Schizosaccharomyces pombe (strain 972 / ATCC 24843) (Fission yeast).